The chain runs to 1004 residues: MGELCRRDSALTALDEETLWEMMESHRHRIVRCICPSRLTPYLRQAKVLCQLDEEEVLHSPRLTNSAMRAGHLLDLLKTRGKNGAIAFLESLKFHNPDVYTLVTGLQPDVDFSNFSGLMETSKLTECLAGAIGSLQEELNQEKGQKEVLLRRCQQLQEHLGLAETRAEGLHQLEADHSRMKREVSAHFHEVLRLKDEMLSLSLHYSNALQEKELAASRCRSLQEELYLLKQELQRANMVSSCELELQEQSLRTASDQESGDEELNRLKEENEKLRSLTFSLAEKDILEQSLDEARGSRQELVERIHSLRERAVAAERQREQYWEEKEQTLLQFQKSKMACQLYREKVNALQAQVCELQKERDQAYSARDSAQREISQSLVEKDSLRRQVFELTDQVCELRTQLRQLQAEPPGVLKQEARTREPCPREKQRLVRMHAICPRDDSDCSLVSSTESQLLSDLSATSSRELVDSFRSSSPAPPSQQSLYKRVAEDFGEEPWSFSSCLEIPEGDPGALPGAKAGDPHLDYELLDTADLPQLESSLQPVSPGRLDVSESGVLMRRRPARRILSQVTMLAFQGDALLEQISVIGGNLTGIFIHRVTPGSAADQMALRPGTQIVMVDYEASEPLFKAVLEDTTLEEAVGLLRRVDGFCCLSVKVNTDGYKRLLQDLEAKVATSGDSFYIRVNLAMEGRAKGELQVHCNEVLHVTDTMFQGCGCWHAHRVNSYTMKDTAAHGTIPNYSRAQQQLIALIQDMTQQCTVTRKPSSGGPQKLVRIVSMDKAKASPLRLSFDRGQLDPSRMEGSSTCFWAESCLTLVPYTLVRPHRPARPRPVLLVPRAVGKILSEKLCLLQGFKKCLAEYLSQEEYEAWSQRGDIIQEGEVSGGRCWVTRHAVESLMEKNTHALLDVQLDSVCTLHRMDIFPIVIHVSVNEKMAKKLKKGLQRLGTSEEQLLEAARQEEGDLDRAPCLYSSLAPDGWSDLDGLLSCVRQAIADEQKKVVWTEQSPR.

Positions 15–107 (DEETLWEMME…DVYTLVTGLQ (93 aa)) constitute a CARD domain. Residues 128–409 (LAGAIGSLQE…RTQLRQLQAE (282 aa)) adopt a coiled-coil conformation. Residues 409–568 (EPPGVLKQEA…RRPARRILSQ (160 aa)) form a maintains the protein in an inactive state region. Position 544 is a phosphoserine (serine 544). The PDZ domain maps to 568–658 (QVTMLAFQGD…FCCLSVKVNT (91 aa)). A Guanylate kinase-like domain is found at 807 to 990 (AESCLTLVPY…LLSCVRQAIA (184 aa)).

As to quaternary structure, interacts (via CARD domain) with BCL10 (via CARD domain). Forms a complex with MALT1 and BCL10; resulting in the formation of a CBM (CARD14-BLC10-MALT1) complex. Interacts with TRAF2, TRAF3 and TRAF6. Isoform 1 is detected in placenta and epidermal keratinocytes. Isoform 2 is detected in leukocytes and fetal brain.

Its subcellular location is the cytoplasm. Acts as a scaffolding protein that can activate the inflammatory transcription factor NF-kappa-B and p38/JNK MAP kinase signaling pathways. Forms a signaling complex with BCL10 and MALT1, and activates MALT1 proteolytic activity and inflammatory gene expression. MALT1 is indispensable for CARD14-induced activation of NF-kappa-B and p38/JNK MAP kinases. May play a role in signaling mediated by TRAF2, TRAF3 and TRAF6 and protects cells against apoptosis. Functionally, not able to activate the inflammatory transcription factor NF-kappa-B and may function as a dominant negative regulator. This chain is Caspase recruitment domain-containing protein 14 (CARD14), found in Homo sapiens (Human).